A 448-amino-acid chain; its full sequence is Asparagine--tRNA ligase (448 aa).

The protein belongs to the class-II aminoacyl-tRNA synthetase family. As to quaternary structure, homodimer.

The protein resides in the cytoplasm. It catalyses the reaction tRNA(Asn) + L-asparagine + ATP = L-asparaginyl-tRNA(Asn) + AMP + diphosphate + H(+). This is Asparagine--tRNA ligase from Streptococcus agalactiae serotype Ia (strain ATCC 27591 / A909 / CDC SS700).